A 342-amino-acid chain; its full sequence is Ribosomal RNA small subunit methyltransferase C (342 aa).

It belongs to the methyltransferase superfamily. RsmC family. In terms of assembly, monomer.

The protein localises to the cytoplasm. It catalyses the reaction guanosine(1207) in 16S rRNA + S-adenosyl-L-methionine = N(2)-methylguanosine(1207) in 16S rRNA + S-adenosyl-L-homocysteine + H(+). Specifically methylates the guanine in position 1207 of 16S rRNA in the 30S particle. The protein is Ribosomal RNA small subunit methyltransferase C of Cronobacter sakazakii (strain ATCC BAA-894) (Enterobacter sakazakii).